The sequence spans 202 residues: Thymidylate kinase (202 aa).

Residue 7–14 (GIDGSGKT) coordinates ATP.

It belongs to the thymidylate kinase family.

The enzyme catalyses dTMP + ATP = dTDP + ADP. Its function is as follows. Phosphorylation of dTMP to form dTDP in both de novo and salvage pathways of dTTP synthesis. This chain is Thymidylate kinase, found in Ehrlichia canis (strain Jake).